The primary structure comprises 394 residues: Elongation factor Tu (394 aa).

The tr-type G domain occupies 10 to 204 (KPHINVGTIG…ALDKYIPEPQ (195 aa)). The interval 19–26 (GHVDHGKT) is G1. 19 to 26 (GHVDHGKT) serves as a coordination point for GTP. Thr-26 contributes to the Mg(2+) binding site. The tract at residues 60-64 (GITIN) is G2. A G3 region spans residues 81–84 (DCPG). GTP contacts are provided by residues 81–85 (DCPGH) and 136–139 (NKCD). A G4 region spans residues 136-139 (NKCD). The tract at residues 174–176 (SAL) is G5.

The protein belongs to the TRAFAC class translation factor GTPase superfamily. Classic translation factor GTPase family. EF-Tu/EF-1A subfamily. Monomer.

Its subcellular location is the cytoplasm. It carries out the reaction GTP + H2O = GDP + phosphate + H(+). Functionally, GTP hydrolase that promotes the GTP-dependent binding of aminoacyl-tRNA to the A-site of ribosomes during protein biosynthesis. In Hamiltonella defensa subsp. Acyrthosiphon pisum (strain 5AT), this protein is Elongation factor Tu.